The primary structure comprises 351 residues: MPSQVIPEKQKAIVFYETDGKLEYKDVTVPEPKPNEILVHVKYSGVCHSDLHAWHGDWPFQLKFPLIGGHEGAGVVVKLGSNVKGWKVGDFAGIKWLNGTCMSCEYCEVGNESQCPYLDGTGFTHDGTFQEYATADAVQAAHIPPNVNLAEVAPILCAGITVYKALKRANVIPGQWVTISGACGGLGSLAIQYALAMGYRVIGIDGGNAKRKLFEQLGGEIFIDFTEEKDIVGAIIKATNGGSHGVINVSVSEAAIEASTRYCRPNGTVVLVGMPAHAYCNSDVFNQVVKSISIVGSCVGNRADTREALDFFARGLIKSPIHLAGLSDVPEIFAKMEKGEIVGRYVVETSK.

Zn(2+) is bound by residues C47, H70, C101, C104, C107, C115, and C183. NAD(+) is bound by residues 181–187 (GACGGLG), D205, K210, 272–274 (VGM), and R344.

The protein belongs to the zinc-containing alcohol dehydrogenase family. The cofactor is Zn(2+).

The catalysed reaction is a primary alcohol + NAD(+) = an aldehyde + NADH + H(+). It carries out the reaction a secondary alcohol + NAD(+) = a ketone + NADH + H(+). The polypeptide is Alcohol dehydrogenase 5 (ADH5) (Saccharomyces pastorianus (Lager yeast)).